Here is a 339-residue protein sequence, read N- to C-terminus: Glycerol-3-phosphate dehydrogenase [NAD(P)+] (339 aa).

NADPH contacts are provided by Ser-13, Trp-14, and Lys-108. The sn-glycerol 3-phosphate site is built by Lys-108, Gly-139, and Ser-141. Ala-143 serves as a coordination point for NADPH. Positions 194, 247, 257, 258, and 259 each coordinate sn-glycerol 3-phosphate. Lys-194 serves as the catalytic Proton acceptor. Residue Arg-258 coordinates NADPH. Val-282 and Glu-284 together coordinate NADPH.

This sequence belongs to the NAD-dependent glycerol-3-phosphate dehydrogenase family.

It localises to the cytoplasm. The enzyme catalyses sn-glycerol 3-phosphate + NAD(+) = dihydroxyacetone phosphate + NADH + H(+). It carries out the reaction sn-glycerol 3-phosphate + NADP(+) = dihydroxyacetone phosphate + NADPH + H(+). It participates in membrane lipid metabolism; glycerophospholipid metabolism. Functionally, catalyzes the reduction of the glycolytic intermediate dihydroxyacetone phosphate (DHAP) to sn-glycerol 3-phosphate (G3P), the key precursor for phospholipid synthesis. In Streptococcus equi subsp. zooepidemicus (strain H70), this protein is Glycerol-3-phosphate dehydrogenase [NAD(P)+].